We begin with the raw amino-acid sequence, 114 residues long: Probable 4-amino-4-deoxy-L-arabinose-phosphoundecaprenol flippase subunit ArnE (114 aa).

3 helical membrane passes run 41-61, 64-84, and 91-111; these read MWLW…LLVL, MDVG…TLVG, and PVDP…FQLG.

It belongs to the ArnE family. In terms of assembly, heterodimer of ArnE and ArnF.

The protein resides in the cell inner membrane. It participates in bacterial outer membrane biogenesis; lipopolysaccharide biosynthesis. Its function is as follows. Translocates 4-amino-4-deoxy-L-arabinose-phosphoundecaprenol (alpha-L-Ara4N-phosphoundecaprenol) from the cytoplasmic to the periplasmic side of the inner membrane. The sequence is that of Probable 4-amino-4-deoxy-L-arabinose-phosphoundecaprenol flippase subunit ArnE from Pseudomonas savastanoi pv. phaseolicola (strain 1448A / Race 6) (Pseudomonas syringae pv. phaseolicola (strain 1448A / Race 6)).